A 111-amino-acid chain; its full sequence is Iron-sulfur cluster assembly protein CyaY (111 aa).

Belongs to the frataxin family.

Functionally, involved in iron-sulfur (Fe-S) cluster assembly. May act as a regulator of Fe-S biogenesis. This chain is Iron-sulfur cluster assembly protein CyaY, found in Cupriavidus pinatubonensis (strain JMP 134 / LMG 1197) (Cupriavidus necator (strain JMP 134)).